Consider the following 491-residue polypeptide: Cytochrome P450 2C40 (491 aa).

The first 25 residues, 1-25, serve as a signal peptide directing secretion; the sequence is MDPFVVLVLCLSFLLVLSLWRQRSA. A heme-binding site is contributed by Cys-435.

This sequence belongs to the cytochrome P450 family. Requires heme as cofactor. As to expression, liver, brain, kidney, and intestine, with trace amounts in lung and heart. Expressed throughout the intestinal tract, with higher expression levels in jejunum, cecum and colon.

Its subcellular location is the endoplasmic reticulum membrane. It localises to the microsome membrane. It carries out the reaction (5Z,8Z,11Z,14Z)-eicosatetraenoate + reduced [NADPH--hemoprotein reductase] + O2 = 16(R)-hydroxy-(5Z,8Z,11Z,14Z)-eicosatetraenoate + oxidized [NADPH--hemoprotein reductase] + H2O + H(+). The catalysed reaction is (5Z,8Z,11Z,14Z)-eicosatetraenoate + reduced [NADPH--hemoprotein reductase] + O2 = 16(S)-hydroxy-(5Z,8Z,11Z,14Z)-eicosatetraenoate + oxidized [NADPH--hemoprotein reductase] + H2O + H(+). It catalyses the reaction (5Z,8Z,11Z,14Z)-eicosatetraenoate + reduced [NADPH--hemoprotein reductase] + O2 = (14R,15S)-epoxy-(5Z,8Z,11Z)-eicosatrienoate + oxidized [NADPH--hemoprotein reductase] + H2O + H(+). The enzyme catalyses (5Z,8Z,11Z,14Z)-eicosatetraenoate + reduced [NADPH--hemoprotein reductase] + O2 = (14S,15R)-epoxy-(5Z,8Z,11Z)-eicosatrienoate + oxidized [NADPH--hemoprotein reductase] + H2O + H(+). Its pathway is lipid metabolism; arachidonate metabolism. Its function is as follows. A cytochrome P450 monooxygenase that may play a major role in the metabolism of arachidonic acid in the intestinal tract. Exhibits regioselective hydroxylase and epoxidase activity toward arachidonic acid, producing 16(R)-hydroxyeicosatetraenoic acid (HETE) and (14R,15S)-epoxyeicosatrienoic acid (EpETrE) as major products. Mechanistically, uses molecular oxygen inserting one oxygen atom into a substrate, and reducing the second into a water molecule, with two electrons provided by NADPH via cytochrome P450 reductase (CPR; NADPH-ferrihemoprotein reductase). This is Cytochrome P450 2C40 from Mus musculus (Mouse).